Reading from the N-terminus, the 171-residue chain is Peptide methionine sulfoxide reductase MsrA (171 aa).

Cys13 is an active-site residue.

Belongs to the MsrA Met sulfoxide reductase family.

The catalysed reaction is L-methionyl-[protein] + [thioredoxin]-disulfide + H2O = L-methionyl-(S)-S-oxide-[protein] + [thioredoxin]-dithiol. It carries out the reaction [thioredoxin]-disulfide + L-methionine + H2O = L-methionine (S)-S-oxide + [thioredoxin]-dithiol. Its function is as follows. Has an important function as a repair enzyme for proteins that have been inactivated by oxidation. Catalyzes the reversible oxidation-reduction of methionine sulfoxide in proteins to methionine. The protein is Peptide methionine sulfoxide reductase MsrA of Mycobacterium ulcerans (strain Agy99).